The sequence spans 261 residues: Small ribosomal subunit protein eS4B (261 aa).

Ser32 carries the phosphoserine modification. An S4 RNA-binding domain is found at 42–105; it reads LPLIVFLRNR…NENFRLVYDV (64 aa). Lys62 is covalently cross-linked (Glycyl lysine isopeptide (Lys-Gly) (interchain with G-Cter in ubiquitin)). Thr115 is subject to Phosphothreonine. Glycyl lysine isopeptide (Lys-Gly) (interchain with G-Cter in ubiquitin) cross-links involve residues Lys134, Lys161, Lys168, Lys174, Lys179, Lys211, and Lys233. The residue at position 247 (Ser247) is a Phosphoserine.

The protein belongs to the eukaryotic ribosomal protein eS4 family. Component of the small ribosomal subunit (SSU). Mature yeast ribosomes consist of a small (40S) and a large (60S) subunit. The 40S small subunit contains 1 molecule of ribosomal RNA (18S rRNA) and 33 different proteins (encoded by 57 genes). The large 60S subunit contains 3 rRNA molecules (25S, 5.8S and 5S rRNA) and 46 different proteins (encoded by 81 genes).

It is found in the cytoplasm. Functionally, component of the ribosome, a large ribonucleoprotein complex responsible for the synthesis of proteins in the cell. The small ribosomal subunit (SSU) binds messenger RNAs (mRNAs) and translates the encoded message by selecting cognate aminoacyl-transfer RNA (tRNA) molecules. The large subunit (LSU) contains the ribosomal catalytic site termed the peptidyl transferase center (PTC), which catalyzes the formation of peptide bonds, thereby polymerizing the amino acids delivered by tRNAs into a polypeptide chain. The nascent polypeptides leave the ribosome through a tunnel in the LSU and interact with protein factors that function in enzymatic processing, targeting, and the membrane insertion of nascent chains at the exit of the ribosomal tunnel. This chain is Small ribosomal subunit protein eS4B, found in Saccharomyces cerevisiae (strain ATCC 204508 / S288c) (Baker's yeast).